Consider the following 625-residue polypeptide: 1,4-alpha-glucan branching enzyme GlgB (625 aa).

The active-site Nucleophile is Asp302. Glu355 serves as the catalytic Proton donor.

Belongs to the glycosyl hydrolase 13 family. GlgB subfamily. As to quaternary structure, monomer.

The enzyme catalyses Transfers a segment of a (1-&gt;4)-alpha-D-glucan chain to a primary hydroxy group in a similar glucan chain.. It participates in glycan biosynthesis; glycogen biosynthesis. Its function is as follows. Catalyzes the formation of the alpha-1,6-glucosidic linkages in glycogen by scission of a 1,4-alpha-linked oligosaccharide from growing alpha-1,4-glucan chains and the subsequent attachment of the oligosaccharide to the alpha-1,6 position. This chain is 1,4-alpha-glucan branching enzyme GlgB, found in Albidiferax ferrireducens (strain ATCC BAA-621 / DSM 15236 / T118) (Rhodoferax ferrireducens).